Consider the following 450-residue polypeptide: Growth/differentiation factor 7 (450 aa).

Residues 1–19 (MDLSAAAALCLWLLSACRP) form the signal peptide. Positions 20–321 (RDGLEAAAVL…AVIGGRRRRR (302 aa)) are excised as a propeptide. N83 carries an N-linked (GlcNAc...) asparagine glycan. The segment at 296 to 349 (ASEPLPDPGTGTASPRAVIGGRRRRRTALAGTRTAQGSGGGAGRGHGRRGRSRC) is disordered. Positions 340–349 (GHGRRGRSRC) are enriched in basic residues. 3 disulfides stabilise this stretch: C349/C415, C378/C447, and C382/C449.

This sequence belongs to the TGF-beta family. Homodimer; disulfide-linked.

Its subcellular location is the secreted. Its function is as follows. May play an active role in the motor area of the primate neocortex. The sequence is that of Growth/differentiation factor 7 (GDF7) from Homo sapiens (Human).